Reading from the N-terminus, the 190-residue chain is MAVLVLASASPRRLDLLRQIAIMPGLVDPAHVDETPLKGELPVPHARRLAEAKALAVAGRHPGAFVLAADTVVACGRRILPKAEDEATARQCLELLSGRRHRVVGGICLIAPDGRIGRRTVTTSVTFKRLSHAEMAAYAASGEWDGKAGGYAIQGLAARYVRDIQGSYSNIVGLSLFETAQLLDGFGFAP.

Aspartate 70 functions as the Proton acceptor in the catalytic mechanism.

The protein belongs to the Maf family. YhdE subfamily. It depends on a divalent metal cation as a cofactor.

The protein localises to the cytoplasm. The catalysed reaction is dTTP + H2O = dTMP + diphosphate + H(+). It catalyses the reaction UTP + H2O = UMP + diphosphate + H(+). Its function is as follows. Nucleoside triphosphate pyrophosphatase that hydrolyzes dTTP and UTP. May have a dual role in cell division arrest and in preventing the incorporation of modified nucleotides into cellular nucleic acids. This chain is dTTP/UTP pyrophosphatase, found in Paramagnetospirillum magneticum (strain ATCC 700264 / AMB-1) (Magnetospirillum magneticum).